The following is a 43-amino-acid chain: Large ribosomal subunit protein uL5 (43 aa).

Belongs to the universal ribosomal protein uL5 family. As to quaternary structure, part of the 50S ribosomal subunit; part of the 5S rRNA/L5/L18/L25 subcomplex. Contacts the 5S rRNA and the P site tRNA. Forms a bridge to the 30S subunit in the 70S ribosome.

Its function is as follows. This is one of the proteins that bind and probably mediate the attachment of the 5S RNA into the large ribosomal subunit, where it forms part of the central protuberance. In the 70S ribosome it contacts protein S13 of the 30S subunit (bridge B1b), connecting the 2 subunits; this bridge is implicated in subunit movement. Contacts the P site tRNA; the 5S rRNA and some of its associated proteins might help stabilize positioning of ribosome-bound tRNAs. This Serratia marcescens protein is Large ribosomal subunit protein uL5 (rplE).